We begin with the raw amino-acid sequence, 383 residues long: Heme A synthase (383 aa).

The next 8 membrane-spanning stretches (helical) occupy residues 38–58 (VRVWLMMLFGLVVIMIAVGGL), 127–147 (VIGLVWALGFFGFLVTRKIPP), 153–173 (LFLLGVLGGLQGAIGWWMVAS), 187–207 (LATHLGLAFFILGLIAWYIMV), 230–250 (ANWLMGLAAVQILLGALVAGI), 287–307 (LVQFNHRMVGYLLLLVGLYVW), 321–341 (AFDWVAVILFGQMVLGIVTVL), and 344–364 (APWTWAIAHQFGAVVTICLIL). Position 292 (His-292) interacts with heme. A heme-binding site is contributed by His-352.

It belongs to the COX15/CtaA family. Type 2 subfamily. Interacts with CtaB. Requires heme b as cofactor.

The protein resides in the cell membrane. The catalysed reaction is Fe(II)-heme o + 2 A + H2O = Fe(II)-heme a + 2 AH2. It functions in the pathway porphyrin-containing compound metabolism; heme A biosynthesis; heme A from heme O: step 1/1. In terms of biological role, catalyzes the conversion of heme O to heme A by two successive hydroxylations of the methyl group at C8. The first hydroxylation forms heme I, the second hydroxylation results in an unstable dihydroxymethyl group, which spontaneously dehydrates, resulting in the formyl group of heme A. This Dinoroseobacter shibae (strain DSM 16493 / NCIMB 14021 / DFL 12) protein is Heme A synthase.